We begin with the raw amino-acid sequence, 237 residues long: MKKKSCFTLVTTFAFSLIFSVSALAGSVFWEPLSYFNRSTWEKADGYSNGGVFNCTWRANNVNFTNDGKLKLGLTSSAYNKFDCAEYRSTNIYGYGLYEVSMKPAKNTGIVSSFFTYTGPAHGTQWDEIDIEFLGKDTTKVQFNYYTNGVGGHEKVISLGFDASKGFHTYAFDWQPGYIKWYVDGVLKHTATANIPSTPGKIMMNLWNGTGVDDWLGSYNGANPLYAEYDWVKYTSN.

A signal peptide spans 1–23 (MKKKSCFTLVTTFAFSLIFSVSA). A GH16 domain is found at 28-237 (VFWEPLSYFN…EYDWVKYTSN (210 aa)). An intrachain disulfide couples C55 to C84. Catalysis depends on E128, which acts as the Nucleophile. E132 acts as the Proton donor in catalysis.

The protein belongs to the glycosyl hydrolase 16 family.

The catalysed reaction is Hydrolysis of (1-&gt;4)-beta-D-glucosidic linkages in beta-D-glucans containing (1-&gt;3)- and (1-&gt;4)-bonds.. This chain is Beta-glucanase, found in Paenibacillus macerans (Bacillus macerans).